The following is a 378-amino-acid chain: Acetylornithine deacetylase (378 aa).

H76 serves as a coordination point for Zn(2+). D78 is a catalytic residue. D108 is a binding site for Zn(2+). E140 is a catalytic residue. Zn(2+) contacts are provided by E141, E165, and H351.

The protein belongs to the peptidase M20A family. ArgE subfamily. In terms of assembly, homodimer. It depends on Zn(2+) as a cofactor. The cofactor is Co(2+). Glutathione serves as cofactor.

The protein localises to the cytoplasm. It carries out the reaction N(2)-acetyl-L-ornithine + H2O = L-ornithine + acetate. Its pathway is amino-acid biosynthesis; L-arginine biosynthesis; L-ornithine from N(2)-acetyl-L-ornithine (linear): step 1/1. Catalyzes the hydrolysis of the amide bond of N(2)-acetylated L-amino acids. Cleaves the acetyl group from N-acetyl-L-ornithine to form L-ornithine, an intermediate in L-arginine biosynthesis pathway, and a branchpoint in the synthesis of polyamines. The chain is Acetylornithine deacetylase from Aliivibrio fischeri (strain ATCC 700601 / ES114) (Vibrio fischeri).